An 848-amino-acid polypeptide reads, in one-letter code: Translation initiation factor IF-2 (848 aa).

The interval 90–253 is disordered; the sequence is RTYIKRAELQ…PKEKRHAFER (164 aa). Over residues 105 to 170 the composition is skewed to low complexity; that stretch reads EAPAPEEPVQ…SAEPAIAPED (66 aa). 2 stretches are compositionally biased toward basic residues: residues 204–215 and 236–248; these read PKKKQAGHRGPR and KPLR…KEKR. Positions 344-511 constitute a tr-type G domain; it reads KRAPVVSVMG…AVLLQAEILE (168 aa). The segment at 353-360 is G1; that stretch reads GHVDHGKT. Residue 353–360 participates in GTP binding; the sequence is GHVDHGKT. Positions 378 to 382 are G2; the sequence is GITQH. The interval 399-402 is G3; that stretch reads DTPG. GTP-binding positions include 399–403 and 453–456; these read DTPGH and NKMD. Positions 453–456 are G4; sequence NKMD. Residues 489 to 491 are G5; that stretch reads SAH.

This sequence belongs to the TRAFAC class translation factor GTPase superfamily. Classic translation factor GTPase family. IF-2 subfamily.

It localises to the cytoplasm. One of the essential components for the initiation of protein synthesis. Protects formylmethionyl-tRNA from spontaneous hydrolysis and promotes its binding to the 30S ribosomal subunits. Also involved in the hydrolysis of GTP during the formation of the 70S ribosomal complex. The polypeptide is Translation initiation factor IF-2 (Marinobacter nauticus (strain ATCC 700491 / DSM 11845 / VT8) (Marinobacter aquaeolei)).